The sequence spans 491 residues: Calcium/calmodulin-dependent protein kinase type II delta 1 chain (491 aa).

The 259-residue stretch at 13-271 (YQLYEELGKG…AAEALKHPWI (259 aa)) folds into the Protein kinase domain. Residues 19–27 (LGKGAFSVV) and Lys-42 contribute to the ATP site. The active-site Proton acceptor is the Asp-135. Thr-286 is modified (phosphothreonine). Position 314 is a phosphoserine (Ser-314). The disordered stretch occupies residues 315-354 (SKNPYKKPDGVKEPQTTVIHNPTDGNKESSESTNTTIEDE). The span at 328–338 (PQTTVIHNPTD) shows a compositional bias: polar residues. A Phosphothreonine modification is found at Thr-350.

Belongs to the protein kinase superfamily. CAMK Ser/Thr protein kinase family. CaMK subfamily. In terms of assembly, CAMK2 is composed of four different chains: alpha, beta, gamma, and delta. The different isoforms assemble into homo- or heteromultimeric holoenzymes composed of 8 to 12 subunits. First detected at the 18-somite stage where expression is restricted to somite boundaries. At 24 hpf, expression is elevated in epidermal tissue and in the hatching gland. After 24 hpf, expression dimishes, but persists at low levels along the dorsal trunk. At 48 hpf, expression is restricted at a low level to the forebrain. At 72 hpf, weak expression reappears along the entire dorsal trunk in discrete cell bodies.

The catalysed reaction is L-seryl-[protein] + ATP = O-phospho-L-seryl-[protein] + ADP + H(+). The enzyme catalyses L-threonyl-[protein] + ATP = O-phospho-L-threonyl-[protein] + ADP + H(+). Its activity is regulated as follows. Autophosphorylation of CAMK2 plays an important role in the regulation of the kinase activity. Its function is as follows. CaM-kinase II (CAMK2) is a prominent kinase in the central nervous system. This chain is Calcium/calmodulin-dependent protein kinase type II delta 1 chain, found in Danio rerio (Zebrafish).